A 211-amino-acid chain; its full sequence is NADH-quinone oxidoreductase subunit I (211 aa).

2 consecutive 4Fe-4S ferredoxin-type domains span residues 90–119 (RLWE…IDTK) and 129–158 (TEYS…HGGE). [4Fe-4S] cluster is bound by residues Cys99, Cys102, Cys105, Cys109, Cys138, Cys141, Cys144, and Cys148.

It belongs to the complex I 23 kDa subunit family. NDH-1 is composed of 14 different subunits. Subunits NuoA, H, J, K, L, M, N constitute the membrane sector of the complex. It depends on [4Fe-4S] cluster as a cofactor.

Its subcellular location is the cell inner membrane. The catalysed reaction is a quinone + NADH + 5 H(+)(in) = a quinol + NAD(+) + 4 H(+)(out). NDH-1 shuttles electrons from NADH, via FMN and iron-sulfur (Fe-S) centers, to quinones in the respiratory chain. The immediate electron acceptor for the enzyme in this species is believed to be ubiquinone. Couples the redox reaction to proton translocation (for every two electrons transferred, four hydrogen ions are translocated across the cytoplasmic membrane), and thus conserves the redox energy in a proton gradient. The polypeptide is NADH-quinone oxidoreductase subunit I (Sulfurimonas denitrificans (strain ATCC 33889 / DSM 1251) (Thiomicrospira denitrificans (strain ATCC 33889 / DSM 1251))).